A 103-amino-acid polypeptide reads, in one-letter code: Small ribosomal subunit protein uS14c (103 aa).

A disordered region spans residues 34 to 56 (KVSPLSLSEKTKMREKLQSLPRN).

Belongs to the universal ribosomal protein uS14 family. Part of the 30S ribosomal subunit.

The protein localises to the plastid. It is found in the chloroplast. In terms of biological role, binds 16S rRNA, required for the assembly of 30S particles. The chain is Small ribosomal subunit protein uS14c from Brachypodium distachyon (Purple false brome).